A 261-amino-acid polypeptide reads, in one-letter code: Carbonic anhydrase 1 (261 aa).

Position 2 is an N-acetylalanine (Ala2). Positions Pro4–Phe261 constitute an Alpha-carbonic anhydrase domain. His65 functions as the Proton donor/acceptor in the catalytic mechanism. The Zn(2+) site is built by His95, His97, and His120. Substrate is bound by residues Thr200 and Thr200 to His201.

This sequence belongs to the alpha-carbonic anhydrase family. Zn(2+) is required as a cofactor.

Its subcellular location is the cytoplasm. It catalyses the reaction hydrogencarbonate + H(+) = CO2 + H2O. The catalysed reaction is urea = cyanamide + H2O. With respect to regulation, inhibited by acetazolamide. Its function is as follows. Catalyzes the reversible hydration of carbon dioxide. Can hydrate cyanamide to urea. The polypeptide is Carbonic anhydrase 1 (CA1) (Bos taurus (Bovine)).